Here is a 92-residue protein sequence, read N- to C-terminus: DNA-binding protein HU-alpha (92 aa).

It belongs to the bacterial histone-like protein family. Heterodimer of an alpha and a beta chain.

Histone-like DNA-binding protein which is capable of wrapping DNA to stabilize it, and thus to prevent its denaturation under extreme environmental conditions. This chain is DNA-binding protein HU-alpha (hupA), found in Burkholderia pseudomallei (strain K96243).